The primary structure comprises 234 residues: Lipoprotein-releasing system ATP-binding protein LolD (234 aa).

Positions 7–233 (LQCINLCKRY…LQHHLTLVGA (227 aa)) constitute an ABC transporter domain. 43–50 (GSSGSGKS) provides a ligand contact to ATP.

This sequence belongs to the ABC transporter superfamily. Lipoprotein translocase (TC 3.A.1.125) family. The complex is composed of two ATP-binding proteins (LolD) and two transmembrane proteins (LolC and LolE).

The protein localises to the cell inner membrane. Functionally, part of the ABC transporter complex LolCDE involved in the translocation of mature outer membrane-directed lipoproteins, from the inner membrane to the periplasmic chaperone, LolA. Responsible for the formation of the LolA-lipoprotein complex in an ATP-dependent manner. This chain is Lipoprotein-releasing system ATP-binding protein LolD, found in Yersinia pestis bv. Antiqua (strain Antiqua).